We begin with the raw amino-acid sequence, 319 residues long: Methionyl-tRNA formyltransferase (319 aa).

113–116 contributes to the (6S)-5,6,7,8-tetrahydrofolate binding site; it reads SLLP.

It belongs to the Fmt family.

It carries out the reaction L-methionyl-tRNA(fMet) + (6R)-10-formyltetrahydrofolate = N-formyl-L-methionyl-tRNA(fMet) + (6S)-5,6,7,8-tetrahydrofolate + H(+). Functionally, attaches a formyl group to the free amino group of methionyl-tRNA(fMet). The formyl group appears to play a dual role in the initiator identity of N-formylmethionyl-tRNA by promoting its recognition by IF2 and preventing the misappropriation of this tRNA by the elongation apparatus. This Pseudomonas fluorescens (strain Pf0-1) protein is Methionyl-tRNA formyltransferase.